The following is a 653-amino-acid chain: Rab11 family-interacting protein 5 (653 aa).

Positions 5–146 (RGAEPAAGPS…AGRAQHTQWY (142 aa)) constitute a C2 domain. Phosphoserine occurs at positions 176, 283, 286, 307, 357, and 367. The disordered stretch occupies residues 269–300 (GPGAELLTRSPSRSSWLSTEGGRDSAQSPKLF). The segment covering 277–286 (RSPSRSSWLS) has biased composition (polar residues). 2 disordered regions span residues 342–402 (HIYN…AVLG) and 415–548 (PGAS…RSSL). Low complexity predominate over residues 357 to 368 (SISGSLPSSGSL). Positions 375 to 387 (FSEEGPRSTDDTW) are enriched in basic and acidic residues. A phosphoserine mark is found at Ser-391 and Ser-395. Composition is skewed to basic and acidic residues over residues 420–430 (PGEEEGARLPE) and 447–460 (VAEK…ERKP). Ser-494, Ser-538, Ser-547, and Ser-553 each carry phosphoserine. In terms of domain architecture, FIP-RBD spans 586-648 (KDSAVLDQSA…ETSPTLLQIP (63 aa)).

As to quaternary structure, interacts with RAB11FIP4. Interacts with NAPG. Interacts with RO60. Interacts with RAB11A that has been activated by GTP binding. In terms of assembly, (Microbial infection) Interacts with Kaposi's sarcoma-associated herpesvirus/HHV-8 protein ORF45; this interaction results in the lysosomal degradation of ORF45 and the inhibition of viral particle release. In terms of processing, phosphorylated on serine and threonine residues. Phosphorylation at Ser-357 is PKA-dependent. As to expression, detected at low levels in heart, brain, placenta, lung, liver, adipocytes, kidney, spleen, skeletal muscle and pancreas.

Its subcellular location is the cytoplasm. The protein resides in the recycling endosome membrane. It localises to the early endosome membrane. The protein localises to the golgi apparatus membrane. It is found in the cytoplasmic vesicle. Its subcellular location is the secretory vesicle membrane. The protein resides in the mitochondrion membrane. In terms of biological role, rab effector involved in protein trafficking from apical recycling endosomes to the apical plasma membrane. Involved in insulin granule exocytosis. May regulate V-ATPase intracellular transport in response to extracellular acidosis. This Homo sapiens (Human) protein is Rab11 family-interacting protein 5.